Here is a 520-residue protein sequence, read N- to C-terminus: Aldehyde dehydrogenase 5, mitochondrial (520 aa).

The transit peptide at 1-23 directs the protein to the mitochondrion; it reads MLSRTRAAAPNSRIFTRSLLRLY. An NAD(+)-binding site is contributed by 266–271; that stretch reads GSTATG. Catalysis depends on E288, which acts as the Proton acceptor. The Nucleophile role is filled by C322.

The protein belongs to the aldehyde dehydrogenase family.

The protein resides in the mitochondrion matrix. It carries out the reaction an aldehyde + NADP(+) + H2O = a carboxylate + NADPH + 2 H(+). It catalyses the reaction an aldehyde + NAD(+) + H2O = a carboxylate + NADH + 2 H(+). It participates in alcohol metabolism; ethanol degradation; acetate from ethanol: step 2/2. Its activity is regulated as follows. Induced by potassium ions. In terms of biological role, minor mitochondrial aldehyde dehydrogenase isoform. Plays a role in regulation or biosynthesis of electron transport chain components. Involved in the biosynthesis of acetate during anaerobic growth on glucose. The sequence is that of Aldehyde dehydrogenase 5, mitochondrial (ALD5) from Saccharomyces cerevisiae (strain YJM789) (Baker's yeast).